We begin with the raw amino-acid sequence, 437 residues long: tRNA modification GTPase MnmE (437 aa).

Residues Arg21, Glu79, and Arg119 each coordinate (6S)-5-formyl-5,6,7,8-tetrahydrofolate. Residues 223 to 364 form the TrmE-type G domain; the sequence is GFRVVLAGPP…FRSALIAHAR (142 aa). Residues 233–238, 252–258, and 277–280 each bind GTP; these read NAGKST, AAEPGTT, and DTAG. The Mg(2+) site is built by Ser237 and Thr258. Lys437 provides a ligand contact to (6S)-5-formyl-5,6,7,8-tetrahydrofolate.

It belongs to the TRAFAC class TrmE-Era-EngA-EngB-Septin-like GTPase superfamily. TrmE GTPase family. In terms of assembly, homodimer. Heterotetramer of two MnmE and two MnmG subunits. K(+) is required as a cofactor.

The protein localises to the cytoplasm. Its function is as follows. Exhibits a very high intrinsic GTPase hydrolysis rate. Involved in the addition of a carboxymethylaminomethyl (cmnm) group at the wobble position (U34) of certain tRNAs, forming tRNA-cmnm(5)s(2)U34. The protein is tRNA modification GTPase MnmE of Novosphingobium aromaticivorans (strain ATCC 700278 / DSM 12444 / CCUG 56034 / CIP 105152 / NBRC 16084 / F199).